A 120-amino-acid chain; its full sequence is ATP-dependent Clp protease adapter protein ClpS (120 aa).

The protein belongs to the ClpS family. Binds to the N-terminal domain of the chaperone ClpA.

In terms of biological role, involved in the modulation of the specificity of the ClpAP-mediated ATP-dependent protein degradation. The polypeptide is ATP-dependent Clp protease adapter protein ClpS (Pseudomonas fluorescens (strain ATCC BAA-477 / NRRL B-23932 / Pf-5)).